Here is a 171-residue protein sequence, read N- to C-terminus: Adenine phosphoribosyltransferase (171 aa).

The protein belongs to the purine/pyrimidine phosphoribosyltransferase family. In terms of assembly, homodimer.

Its subcellular location is the cytoplasm. It catalyses the reaction AMP + diphosphate = 5-phospho-alpha-D-ribose 1-diphosphate + adenine. It functions in the pathway purine metabolism; AMP biosynthesis via salvage pathway; AMP from adenine: step 1/1. In terms of biological role, catalyzes a salvage reaction resulting in the formation of AMP, that is energically less costly than de novo synthesis. The polypeptide is Adenine phosphoribosyltransferase (Rhodospirillum centenum (strain ATCC 51521 / SW)).